We begin with the raw amino-acid sequence, 274 residues long: Transcription factor MYB58 (274 aa).

HTH myb-type domains lie at 11–63 and 64–118; these read KTKV…INYL and RPDV…KKRL. DNA-binding regions (H-T-H motif) lie at residues 39–63 and 91–114; these read WRSL…INYL and WSKI…HTHL. 2 disordered regions span residues 121-160 and 237-274; these read ETNL…ISSK and SELG…LLIH. Residues 263 to 274 are compositionally biased toward low complexity; it reads SSLLESYELLIH.

Expressed in leaves. Specifically expressed in fibers and vessels undergoing secondary wall thickening, especially in inflorescence stems.

Its subcellular location is the nucleus. Transcriptional activator that binds DNA to the AC cis-elements 5'-ACCTACC-3', 5'-ACCAACC-3' and 5'-ACCTAAC-3' of promoters and specifically activates lignin biosynthetic genes during secondary wall formation mediated by SND1. This chain is Transcription factor MYB58, found in Arabidopsis thaliana (Mouse-ear cress).